The primary structure comprises 626 residues: MNKILLKRQILYNLPKYFKNNIPYTITINKSNQFINNNCKNNNNNFRKLNFTTTTTTTTTAPITNNKPKSNMLYSPKDRSYEEAVNALLTLQSNQTVIISWTKERRDNKEESAKFLMEEMRNYCKTLSIDLERESIIHVAGTKGKGSTCAITESIIREQGFSTGLFTSPHLISPRERIRINGEMISKEMFSQYFWNCWDLLIKDYQTQLPNFFRYLTLMALKIFQDEAIQCTILEVGIGGRMDSTNVFPKPMVTGISALGYDHQNLLGNTLAEIALEKAGIMKVGIPIFTVSSQLPEAINVLIDHSNKVKSPLSIVPSIDQYTISSGGGNNNNNKIESIGLKGTHQLENASLAIALANCWFKKQTFKDVNEIFNSENHKQYNYETNNYNVTQFTPLLKSIELGLKNCEWAGRAQHFTNPSHFPNMDFYLDGAHTVESSIVMLNWWKSIVNTTTTTTTTTTTTTTNNNDDDTIHILIFNSTGGRNPTSFLTPIIQSIDNKEIPIFNKSIIPNIIIEKPIDKKYYINEIIQSNQSSTATTTPIPDNAAVKQTTEIKESSTWEDFVVECYDKLSKKSHPCITADSIESSIEIAKELSENGTKNVKVLITGSLYLVGGVLKVLLKEKSFN.

144–147 (GKGS) provides a ligand contact to ATP. 3 residues coordinate Mg(2+): serine 168, glutamate 235, and histidine 263. Residues arginine 412 and aspartate 430 each contribute to the ATP site.

Belongs to the folylpolyglutamate synthase family.

It catalyses the reaction (6S)-5,6,7,8-tetrahydrofolyl-(gamma-L-Glu)(n) + L-glutamate + ATP = (6S)-5,6,7,8-tetrahydrofolyl-(gamma-L-Glu)(n+1) + ADP + phosphate + H(+). It participates in cofactor biosynthesis; tetrahydrofolylpolyglutamate biosynthesis. Its function is as follows. Conversion of folates to polyglutamate derivatives. In Dictyostelium discoideum (Social amoeba), this protein is Putative folylpolyglutamate synthase (folC).